The following is a 111-amino-acid chain: Protein GLUTAMINE DUMPER 6 (111 aa).

The Extracellular segment spans residues 1 to 16; that stretch reads MRPTPKVEIWKSPVPY. Residues 17–37 form a helical membrane-spanning segment; sequence LFGGLFLLVLLIALALLSLVC. Over 38 to 111 the chain is Cytoplasmic; that stretch reads THQKPSSSSN…NCDNVTVIST (74 aa). The span at 40-49 shows a compositional bias: polar residues; that stretch reads QKPSSSSNNN. Positions 40–63 are disordered; that stretch reads QKPSSSSNNNHMDEEDDVGDKDAK. Residues 75–79 carry the VIMAG; degenerate motif; that stretch reads VILAG.

The protein belongs to the GLUTAMINE DUMPER 1 (TC 9.B.60) family. Expressed in the vascular tissues.

Its subcellular location is the membrane. In terms of biological role, probable subunit of an amino acid transporter involved in the regulation of the amino acid metabolism. Stimulates amino acid export by activating nonselective amino acid facilitators. This chain is Protein GLUTAMINE DUMPER 6 (GDU6), found in Arabidopsis thaliana (Mouse-ear cress).